The following is a 517-amino-acid chain: Crotonobetaine/carnitine--CoA ligase (517 aa).

Belongs to the ATP-dependent AMP-binding enzyme family.

The enzyme catalyses 4-(trimethylamino)butanoate + ATP + CoA = 4-(trimethylamino)butanoyl-CoA + AMP + diphosphate. It catalyses the reaction crotonobetaine + ATP + CoA = crotonobetainyl-CoA + AMP + diphosphate. The catalysed reaction is (R)-carnitine + ATP + CoA = (R)-carnitinyl-CoA + AMP + diphosphate. Its pathway is amine and polyamine metabolism; carnitine metabolism. Catalyzes the transfer of CoA to carnitine, generating the initial carnitinyl-CoA needed for the CaiB reaction cycle. Also has activity toward crotonobetaine and gamma-butyrobetaine. The sequence is that of Crotonobetaine/carnitine--CoA ligase from Escherichia coli O9:H4 (strain HS).